Consider the following 140-residue polypeptide: Large ribosomal subunit protein uL14 (140 aa).

It belongs to the universal ribosomal protein uL14 family. Part of the 50S ribosomal subunit. Forms a cluster with proteins L3 and L24e, part of which may contact the 16S rRNA in 2 intersubunit bridges.

In terms of biological role, binds to 23S rRNA. Forms part of two intersubunit bridges in the 70S ribosome. The protein is Large ribosomal subunit protein uL14 of Staphylothermus marinus (strain ATCC 43588 / DSM 3639 / JCM 9404 / F1).